The chain runs to 171 residues: Spiderine-2b (171 aa).

An N-terminal signal peptide occupies residues 1–18 (MKFALVLLGFCAFYLVNA). Residues 19–58 (TGDLETELEASDLQELQEALDLIAETPLESLEAEELEEAR) constitute a propeptide, removed in mature form. Residues 59 to 104 (KFKFPKINWGKLASKAKDVYKKGQKLAKNKNVKKALKYGKQLAENL) form a linear cationic cytotoxin domain region. Residues 118–171 (NNKCWAIGTRCTDDCDCCPEHHCHCPAKSWTFGLIPCSCQVTESDKVNKCPPAE) enclose the Oxytoxin-type inhibitor cystine knot (ICK) domain. Intrachain disulfides connect C121–C135, C128–C140, C132–C167, C134–C156, and C142–C154.

Belongs to the spiderine family. Cationic/spiderine subfamily. In terms of tissue distribution, expressed by the venom gland.

It localises to the secreted. In terms of biological role, has antimicrobial, insecticidal, cytolytic and cytotoxic activity. The sequence is that of Spiderine-2b from Oxyopes takobius (Lynx spider).